We begin with the raw amino-acid sequence, 681 residues long: UvrABC system protein C (681 aa).

The segment at 1–23 (MNGKKLPDGGILFDETDDEDDDA) is disordered. Residues 14–23 (DETDDEDDDA) are compositionally biased toward acidic residues. In terms of domain architecture, GIY-YIG spans 67–145 (NSPGVYRMFN…IKRLRPRFNV (79 aa)). The UVR domain occupies 255–290 (QAVKTAIARQMNEASEDLDFERAAIYRDRLAALSHV).

This sequence belongs to the UvrC family. In terms of assembly, interacts with UvrB in an incision complex.

The protein localises to the cytoplasm. In terms of biological role, the UvrABC repair system catalyzes the recognition and processing of DNA lesions. UvrC both incises the 5' and 3' sides of the lesion. The N-terminal half is responsible for the 3' incision and the C-terminal half is responsible for the 5' incision. The sequence is that of UvrABC system protein C from Agrobacterium fabrum (strain C58 / ATCC 33970) (Agrobacterium tumefaciens (strain C58)).